The following is a 477-amino-acid chain: Ribulose bisphosphate carboxylase large chain (477 aa).

Residues 1–2 (MS) constitute a propeptide that is removed on maturation. At Pro3 the chain carries N-acetylproline. Lys14 is modified (N6,N6,N6-trimethyllysine). Residues Asn123 and Thr173 each coordinate substrate. Lys175 acts as the Proton acceptor in catalysis. A substrate-binding site is contributed by Lys177. Residues Lys201, Asp203, and Glu204 each coordinate Mg(2+). An N6-carboxylysine modification is found at Lys201. His294 (proton acceptor) is an active-site residue. 3 residues coordinate substrate: Arg295, His327, and Ser379.

It belongs to the RuBisCO large chain family. Type I subfamily. Heterohexadecamer of 8 large chains and 8 small chains; disulfide-linked. The disulfide link is formed within the large subunit homodimers. The cofactor is Mg(2+). The disulfide bond which can form in the large chain dimeric partners within the hexadecamer appears to be associated with oxidative stress and protein turnover.

It localises to the plastid. The protein resides in the chloroplast. It carries out the reaction 2 (2R)-3-phosphoglycerate + 2 H(+) = D-ribulose 1,5-bisphosphate + CO2 + H2O. It catalyses the reaction D-ribulose 1,5-bisphosphate + O2 = 2-phosphoglycolate + (2R)-3-phosphoglycerate + 2 H(+). Functionally, ruBisCO catalyzes two reactions: the carboxylation of D-ribulose 1,5-bisphosphate, the primary event in carbon dioxide fixation, as well as the oxidative fragmentation of the pentose substrate in the photorespiration process. Both reactions occur simultaneously and in competition at the same active site. This Manihot esculenta (Cassava) protein is Ribulose bisphosphate carboxylase large chain.